The sequence spans 203 residues: Large ribosomal subunit protein bL25 (203 aa).

A disordered region spans residues Glu-182–Ser-203.

This sequence belongs to the bacterial ribosomal protein bL25 family. CTC subfamily. Part of the 50S ribosomal subunit; part of the 5S rRNA/L5/L18/L25 subcomplex. Contacts the 5S rRNA. Binds to the 5S rRNA independently of L5 and L18.

Functionally, this is one of the proteins that binds to the 5S RNA in the ribosome where it forms part of the central protuberance. In Caldicellulosiruptor saccharolyticus (strain ATCC 43494 / DSM 8903 / Tp8T 6331), this protein is Large ribosomal subunit protein bL25.